The following is a 447-amino-acid chain: MREILHIQGGQCGNQIGSKFWEVVCDEHGIDPTGRYVGTSDLQLERVNVYYNEASCGRFVPRAVLMDLEPGTMDSVRTGPYGQIFRPDNFVFGQSGAGNNWAKGHYTEGAELIDSVLDVVRKEAENCDCLQGFQVCHSLGGGTGSGMGTLLISKIREEYPDRMMLTFSVFPSPKVSDTVVEPYNATLSVHQLVENADECMVLDNEALYDICFRTLKLTTPSFGDLNHLISATMSGVTCCLRFPGQLNSDLRKLAVNLIPFPRLHFFMVGFAPLTSRGSQQYRALTVPELTQQMWDAKNMMCAADPRHGRYLTASAMFRGKMSTKEVDEQMINVQNKNSSYFVEWIPNNVKSSVCDIPPRGLSMASTFIGNSTSIQEMFRRVSEQFTAMFRRKAFLHWYTGEGMDEMEFTEAESNMNDLVSEYQQYQDATADEEGDYEDEEEQVPEDE.

Residues Gln-11, Glu-69, Ser-138, Gly-142, Thr-143, Gly-144, Asn-204, and Asn-226 each coordinate GTP. Glu-69 provides a ligand contact to Mg(2+). Residues 411–427 (AESNMNDLVSEYQQYQD) show a composition bias toward polar residues. A disordered region spans residues 411–447 (AESNMNDLVSEYQQYQDATADEEGDYEDEEEQVPEDE). A compositionally biased stretch (acidic residues) spans 429–447 (TADEEGDYEDEEEQVPEDE).

It belongs to the tubulin family. In terms of assembly, dimer of alpha and beta chains. A typical microtubule is a hollow water-filled tube with an outer diameter of 25 nm and an inner diameter of 15 nM. Alpha-beta heterodimers associate head-to-tail to form protofilaments running lengthwise along the microtubule wall with the beta-tubulin subunit facing the microtubule plus end conferring a structural polarity. Microtubules usually have 13 protofilaments but different protofilament numbers can be found in some organisms and specialized cells. Requires Mg(2+) as cofactor. As to expression, expressed in leaf sheaths.

It localises to the cytoplasm. The protein resides in the cytoskeleton. Tubulin is the major constituent of microtubules, a cylinder consisting of laterally associated linear protofilaments composed of alpha- and beta-tubulin heterodimers. Microtubules grow by the addition of GTP-tubulin dimers to the microtubule end, where a stabilizing cap forms. Below the cap, tubulin dimers are in GDP-bound state, owing to GTPase activity of alpha-tubulin. This Oryza sativa subsp. japonica (Rice) protein is Tubulin beta-1 chain (TUBB1).